We begin with the raw amino-acid sequence, 257 residues long: 5-keto-4-deoxy-D-glucarate aldolase (257 aa).

Catalysis depends on histidine 51, which acts as the Proton acceptor. Residue glutamine 152 participates in substrate binding. Glutamate 154 is a binding site for Mg(2+). Serine 179 and aspartate 180 together coordinate substrate. Aspartate 180 is a binding site for Mg(2+).

This sequence belongs to the HpcH/HpaI aldolase family. KDGluc aldolase subfamily. Homohexamer; trimer of dimers. It depends on Mg(2+) as a cofactor.

The catalysed reaction is 5-dehydro-4-deoxy-D-glucarate = 2-hydroxy-3-oxopropanoate + pyruvate. It catalyses the reaction 2-dehydro-3-deoxy-D-glucarate = 2-hydroxy-3-oxopropanoate + pyruvate. The protein operates within carbohydrate acid metabolism; galactarate degradation; D-glycerate from galactarate: step 2/3. In terms of biological role, catalyzes the reversible retro-aldol cleavage of both 5-keto-4-deoxy-D-glucarate and 2-keto-3-deoxy-D-glucarate to pyruvate and tartronic semialdehyde. The polypeptide is 5-keto-4-deoxy-D-glucarate aldolase (Citrobacter koseri (strain ATCC BAA-895 / CDC 4225-83 / SGSC4696)).